A 192-amino-acid polypeptide reads, in one-letter code: Cytochrome b-245 light chain (192 aa).

Residues 2 to 7 (GQIEWA) are Cytoplasmic-facing. Residues 8 to 30 (MWANEQALASGLILITGGIVATA) form a helical membrane-spanning segment. Residues 31–35 (GQFAQ) lie on the Extracellular side of the membrane. Residues 36–53 (WYLGAYSIAAGVLICLLE) form a helical membrane-spanning segment. The Cytoplasmic segment spans residues 54-69 (YPRGKRSKGSTMERCG). An intramembrane segment occupies 70-80 (QKYLTRAVKVF). Over 81–86 (GPLTSN) the chain is Cytoplasmic. Residues 87 to 104 (YYIRAFLHLGLSVPAGFL) traverse the membrane as a helical segment. Residue Leu-105 is a topological domain, extracellular. A helical membrane pass occupies residues 106–126 (ATILGTACLAIASSIYLLAAI). Over 127–192 (HGEHWTPIET…NPMPVTDEVV (66 aa)) the chain is Cytoplasmic. The interval 134–192 (IETKPKERPQVGGTIKQPPSNPPPRPPAEARKKPSEEEVAGVPGGGPQENPMPVTDEVV) is disordered. Thr-147 carries the phosphothreonine modification. A Glycyl lysine isopeptide (Lys-Gly) (interchain with G-Cter in ubiquitin) cross-link involves residue Lys-149. At Ser-168 the chain carries Phosphoserine.

It belongs to the p22phox family. Component of the phagocyte NADPH oxidase core complex/cytochrome b558 complex, composed of CYBB (heavy chain (beta)) and CYBA (light chain (alpha)). Component of the phagocyte NADPH oxidase complex composed of an obligatory core heterodimer formed by the membrane proteins CYBA and CYBB and the cytosolic regulatory subunits NCF1/p47-phox, NCF2/p67-phox, NCF4/p40-phox and the small GTPase RAC1 or RAC2. Interacts with NCF1 (via SH3 domain). Interacts with SH3PXD2A. Interacts with DUOX1, DUOX2 and TPO. Interacts with NOX4; this interaction mediates superoxide generation. Interacts with calprotectin (S100A8/9). Interacts with GBP7. Interacts with NOXO1. Forms a heterodimer with NOX3 and is essential for activity and cell membrane localization of NOX3. Interacts with NOX1. In terms of processing, phosphorylation at Thr-147 enhances NADPH oxidase activity by promoting NCF1/p47-phox binding. Post-translationally, ubiquitinated at Lys-149 likely by RNF145.

The protein resides in the cell membrane. Its function is as follows. Subunit of NADPH oxidase complexes that is required for the NADPH oxidase activity that generates, in various cell types, superoxide from molecular oxygen utilizing NADPH as an electron donor. Subunit of the phagocyte NADPH oxidase complex that mediates the transfer of electrons from cytosolic NADPH to O2 to produce the superoxide anion (O2(-)). In the activated complex, electrons are first transferred from NADPH to flavin adenine dinucleotide (FAD) and subsequently transferred via two heme molecules to molecular oxygen, producing superoxide through an outer-sphere reaction. Activation of the NADPH oxidase complex is initiated by the assembly of cytosolic subunits of the NADPH oxidase complex with the core NADPH oxidase complex to form a complex at the plasma membrane or phagosomal membrane. This activation process is initiated by phosphorylation dependent binding of the cytosolic NCF1/p47-phox subunit to the C-terminus of CYBA/p22-phox. Aassociates with NOX3 to form a functional NADPH oxidase constitutively generating superoxide. The protein is Cytochrome b-245 light chain of Tursiops truncatus (Atlantic bottle-nosed dolphin).